A 101-amino-acid chain; its full sequence is Cyanovirin-N (101 aa).

2 cysteine pairs are disulfide-bonded: Cys8–Cys22 and Cys58–Cys73.

This sequence belongs to the cyanovirin-N family. As to quaternary structure, in solution exists as a metastable domain-swapped homodimer which very slowly converts into a more stable monomeric form at room temperature. Under physiological conditions it is unlikely that the dimeric species exists and indeed the monomer is more active against HIV. Interacts with HIV-1 gp120. Post-translationally, cleavage, or reduction and alkylation of the disulfide bonds results in the loss of anti-HIV activity.

In terms of biological role, mannose-binding lectin. The chain is Cyanovirin-N from Nostoc ellipsosporum.